We begin with the raw amino-acid sequence, 804 residues long: MNSMSKKEYKHFERSITLHIKHADFELVGQKYRGRDLYEYLFIKGSKPIHTATGKTSNLYEIISEDKGPDEALKIIGDTFTEDDINILLRGGFHDDNKTPEGVLELIQHILLAGEVLHPGGDVIEPQSFKDYPEKIQAYADQLINDDSIDILESITRVIGEAHYGDEKAVKLLLLSIGTLFLRDTPPVHQALRGSTGSGKTDLVLKTVLAVPERYVHILRSASPKYLFYASETGILREDYNIFVFDDIELNDEIIAISKTITDNILPEKEHHTVKDQEALKLEIPGEGLAIFTRARDIHDNELNDRLLYNNPVEDEDHSRFVKEKIKEEAISGSVMDDKRIMEAYEVIRAVYERLIEGDVRVYNPYLHLLDLRGYSNRDIKHIVGLVKAVTWYRQHKRRREGSYVREGGHDIIIGTEDDLRDALELWMSIDTLQRYKLDRKQEKFLKSLPEYSDELYKQHTNSIFWDDPELPTYSGLAERLGLSKSTIYRWVNGRHEKDRDIEGLKDKGNKGLVIIKPLEPENPKSPSLIYRKPGIVGKHLQLKNGGEASESGFTLFPSVDMDLGTAENARIWKKTIFHSMVLGVSQIQSNIQDNLIQEWLDNNTNPMETHEDVVEFIVDVRAFIHDNLQTPPDVTCNPVYTILGNGKHPLETGGESSNHGDKHDLVLTRAGSIVGNRVNSENKGSEPSDEMTCFPQKNYYSGVGGDLQAEYTDAMARGDDSMIGELEARIPPDTPENLEERRVTLKKKLKDKSISAGEKMELLKELGGVLSTLMRKPVDNERIVEYAKELGEVRREIEDMQGG.

This is an uncharacterized protein from Methanothermobacter marburgensis (strain ATCC BAA-927 / DSM 2133 / JCM 14651 / NBRC 100331 / OCM 82 / Marburg) (Methanobacterium thermoautotrophicum).